The following is a 291-amino-acid chain: MRSTPLGTTAVSPASIKHNSYGYGRFVSSSGVSNFSIHRRRRHSSFSISQAPSQINSGACNASQIVDLFPAVSPEIVVREARLEDCWEVAETHCSSFFPGYSFPLDVVLRVDRLMAMVMGFSIPPGCQRTCLVAVIGSSVDETICFGSDDFKIGAFDAKISLNKGYVAGILTVDTVADYLPRKGPLRQRRTGIAYVSNVAVRENFRRKGIAKRLIWKAEALAKNWGCRAIGLHCDLNNLGATKLYKDQGFRSIKIPEGATWPQPKTSPDTRFTFMMKLVNNNNTQALEQFR.

The transit peptide at 1 to 61 (MRSTPLGTTA…PSQINSGACN (61 aa)) directs the protein to the chloroplast. An N-acetyltransferase domain is found at 76 to 280 (IVVREARLED…RFTFMMKLVN (205 aa)). Residues 199–201 (VAV) and 207–212 (RKGIAK) each bind acetyl-CoA. An N6-acetyllysine modification is found at lysine 217. Residues 238–240 (NLG) and tyrosine 245 each bind acetyl-CoA. Tyrosine 245 acts as the Proton donor in catalysis. N6-acetyllysine occurs at positions 254 and 265.

The protein belongs to the acetyltransferase family. GNAT subfamily. Oligomer. Autoacetylated at K-217, K-254 and K-265. As to expression, expressed in green tissues.

It is found in the plastid. The protein resides in the chloroplast. It catalyses the reaction an N-terminal L-alpha-aminoacyl-[protein] + acetyl-CoA = N-terminal N(alpha)-acetyl-L-alpha-aminoacyl-[protein] + CoA + H(+). The catalysed reaction is L-lysyl-[protein] + acetyl-CoA = N(6)-acetyl-L-lysyl-[protein] + CoA + H(+). It carries out the reaction N-terminal L-alanyl-[protein] + acetyl-CoA = N-terminal N(alpha)-acetyl-L-alanyl-[protein] + CoA + H(+). The enzyme catalyses N-terminal L-seryl-[protein] + acetyl-CoA = N-terminal N(alpha)-acetyl-L-seryl-[protein] + CoA + H(+). It catalyses the reaction N-terminal L-threonyl-[protein] + acetyl-CoA = N-terminal N(alpha)-acetyl-L-threonyl-[protein] + CoA + H(+). The catalysed reaction is N-terminal L-methionyl-[protein] + acetyl-CoA = N-terminal N(alpha)-acetyl-L-methionyl-[protein] + CoA + H(+). It carries out the reaction N-terminal L-valyl-[protein] + acetyl-CoA = N-terminal N(alpha)-acetyl-L-valyl-[protein] + CoA + H(+). The enzyme catalyses N-terminal glycyl-[protein] + acetyl-CoA = N-terminal N(alpha)-acetylglycyl-[protein] + CoA + H(+). Functionally, protein acetyltransferase with dual specificity triggering both N-alpha-acetylation (NTA), with a large spectrum of modified N-termini, including methionine, alanine, serine, threonine and to a lower extent glycine and valine as substrates, and epsilon-lysine acetylation (KA) of several plastid proteins. This is GCN5-related N-acetyltransferase 4, chloroplastic from Arabidopsis thaliana (Mouse-ear cress).